Here is a 194-residue protein sequence, read N- to C-terminus: dCTP deaminase (194 aa).

Residues 110–115 (RSSLAR), aspartate 128, 136–138 (VLE), tyrosine 171, lysine 178, and glutamine 182 contribute to the dCTP site. Catalysis depends on glutamate 138, which acts as the Proton donor/acceptor.

The protein belongs to the dCTP deaminase family. As to quaternary structure, homotrimer.

It catalyses the reaction dCTP + H2O + H(+) = dUTP + NH4(+). It functions in the pathway pyrimidine metabolism; dUMP biosynthesis; dUMP from dCTP (dUTP route): step 1/2. Its function is as follows. Catalyzes the deamination of dCTP to dUTP. In Glaesserella parasuis serovar 5 (strain SH0165) (Haemophilus parasuis), this protein is dCTP deaminase.